The sequence spans 545 residues: T-complex protein 1 subunit alpha (545 aa).

Residue S2 is modified to N-acetylserine.

This sequence belongs to the TCP-1 chaperonin family. In terms of assembly, heterooligomeric complex of about 850 to 900 kDa that forms two stacked rings, 12 to 16 nm in diameter.

Its subcellular location is the cytoplasm. In terms of biological role, molecular chaperone; assists the folding of proteins upon ATP hydrolysis. Known to play a role, in vitro, in the folding of actin and tubulin. The polypeptide is T-complex protein 1 subunit alpha (Arabidopsis thaliana (Mouse-ear cress)).